The following is a 250-amino-acid chain: MRKTIIAGNWKMNLSLKEAVFLAHSIREKIPSISKDKVSMVFPSTLHLENVSKILEGSSVIVGAQNCYHSGLAAFTGETSPDQLKEIGVKVVMVGHSERRQFLGESNFFCNDKIRFLLKNEFTVLYCVGETLSERESGKTLEVLSSQIREGLKGIDSVFFSNLILAYEPVWAIGTGKVATPSQAQEVHSFIRKEISGLFVGASSISESISILYGGSVKPDNIQDLLKEKDIDGGLVGGASQKISSFAELF.

A substrate-binding site is contributed by 9 to 11 (NWK). H96 serves as the catalytic Electrophile. E168 serves as the catalytic Proton acceptor. Residues G174, S216, and 237-238 (GG) each bind substrate.

This sequence belongs to the triosephosphate isomerase family. In terms of assembly, homodimer.

It is found in the cytoplasm. The catalysed reaction is D-glyceraldehyde 3-phosphate = dihydroxyacetone phosphate. Its pathway is carbohydrate biosynthesis; gluconeogenesis. It functions in the pathway carbohydrate degradation; glycolysis; D-glyceraldehyde 3-phosphate from glycerone phosphate: step 1/1. In terms of biological role, involved in the gluconeogenesis. Catalyzes stereospecifically the conversion of dihydroxyacetone phosphate (DHAP) to D-glyceraldehyde-3-phosphate (G3P). This Leptospira interrogans serogroup Icterohaemorrhagiae serovar Lai (strain 56601) protein is Triosephosphate isomerase.